Consider the following 217-residue polypeptide: Thymidylate kinase (217 aa).

Residue 12–19 (GIDGSGKS) participates in ATP binding.

This sequence belongs to the thymidylate kinase family.

It catalyses the reaction dTMP + ATP = dTDP + ADP. Phosphorylation of dTMP to form dTDP in both de novo and salvage pathways of dTTP synthesis. The protein is Thymidylate kinase of Cereibacter sphaeroides (strain ATCC 17023 / DSM 158 / JCM 6121 / CCUG 31486 / LMG 2827 / NBRC 12203 / NCIMB 8253 / ATH 2.4.1.) (Rhodobacter sphaeroides).